The sequence spans 889 residues: Translation initiation factor IF-2 (889 aa).

A disordered region spans residues leucine 158–glutamine 296. The segment covering alanine 209 to threonine 228 has biased composition (low complexity). Residues valine 238 to glycine 270 show a composition bias toward basic and acidic residues. The region spanning proline 391–lysine 560 is the tr-type G domain. Residues glycine 400 to threonine 407 form a G1 region. Glycine 400–threonine 407 is a binding site for GTP. The G2 stretch occupies residues glycine 425 to histidine 429. The tract at residues aspartate 446 to glycine 449 is G3. GTP-binding positions include aspartate 446–histidine 450 and asparagine 500–aspartate 503. The tract at residues asparagine 500–aspartate 503 is G4. The interval serine 536 to lysine 538 is G5.

The protein belongs to the TRAFAC class translation factor GTPase superfamily. Classic translation factor GTPase family. IF-2 subfamily.

The protein resides in the cytoplasm. Its function is as follows. One of the essential components for the initiation of protein synthesis. Protects formylmethionyl-tRNA from spontaneous hydrolysis and promotes its binding to the 30S ribosomal subunits. Also involved in the hydrolysis of GTP during the formation of the 70S ribosomal complex. This is Translation initiation factor IF-2 from Nitrosomonas europaea (strain ATCC 19718 / CIP 103999 / KCTC 2705 / NBRC 14298).